A 490-amino-acid chain; its full sequence is Betaine aldehyde dehydrogenase (490 aa).

T26, I27, and D93 together coordinate K(+). Position 150 to 152 (150 to 152 (GAW)) interacts with NAD(+). K162 acts as the Charge relay system in catalysis. NAD(+) is bound at residue 176–179 (KPSE). K(+) is bound at residue V180. An NAD(+)-binding site is contributed by 230 to 233 (GVAS). L246 serves as a coordination point for K(+). E252 functions as the Proton acceptor in the catalytic mechanism. Positions 254, 286, and 387 each coordinate NAD(+). The Nucleophile role is filled by C286. C286 carries the cysteine sulfenic acid (-SOH) modification. The K(+) site is built by K457 and G460. E464 (charge relay system) is an active-site residue.

It belongs to the aldehyde dehydrogenase family. Dimer of dimers. Requires K(+) as cofactor.

The catalysed reaction is betaine aldehyde + NAD(+) + H2O = glycine betaine + NADH + 2 H(+). The protein operates within amine and polyamine biosynthesis; betaine biosynthesis via choline pathway; betaine from betaine aldehyde: step 1/1. Its function is as follows. Involved in the biosynthesis of the osmoprotectant glycine betaine. Catalyzes the irreversible oxidation of betaine aldehyde to the corresponding acid. This is Betaine aldehyde dehydrogenase from Shigella flexneri serotype 5b (strain 8401).